A 143-amino-acid polypeptide reads, in one-letter code: Nucleoside diphosphate kinase (143 aa).

Lys11, Phe59, Arg87, Thr93, Arg104, and Asn114 together coordinate ATP. Residue His117 is the Pros-phosphohistidine intermediate of the active site.

The protein belongs to the NDK family. As to quaternary structure, homotetramer. Mg(2+) is required as a cofactor.

The protein localises to the cytoplasm. The enzyme catalyses a 2'-deoxyribonucleoside 5'-diphosphate + ATP = a 2'-deoxyribonucleoside 5'-triphosphate + ADP. It carries out the reaction a ribonucleoside 5'-diphosphate + ATP = a ribonucleoside 5'-triphosphate + ADP. Functionally, major role in the synthesis of nucleoside triphosphates other than ATP. The ATP gamma phosphate is transferred to the NDP beta phosphate via a ping-pong mechanism, using a phosphorylated active-site intermediate. The polypeptide is Nucleoside diphosphate kinase (Shewanella amazonensis (strain ATCC BAA-1098 / SB2B)).